Here is a 404-residue protein sequence, read N- to C-terminus: Protein L-Myc-1b (404 aa).

Disordered stretches follow at residues 175 to 195 (KKQV…EEID) and 238 to 331 (QQHN…FLER). Residues 287–315 (VPAQSPTVSASPTHTSYHLKSQPSSPQSS) are compositionally biased toward polar residues. A bHLH domain is found at 321-373 (DKRKTHNFLERKRRNDLRSRFLALRDEIPGLVDCPKTPKVVILTKATEYLRTL). Positions 373–401 (LHVSDRQKAQEKKQLKSKQQQLLRRLAEL) are leucine-zipper.

As to quaternary structure, efficient DNA binding requires dimerization with another bHLH protein. Binds DNA as a heterodimer with max.

The protein resides in the nucleus. The protein is Protein L-Myc-1b of Danio rerio (Zebrafish).